A 623-amino-acid polypeptide reads, in one-letter code: Protein EDS1L (623 aa).

Ala2 carries the N-acetylalanine modification. Catalysis depends on Ser123, which acts as the Nucleophile. Active-site charge relay system residues include Asp187 and His317.

In terms of assembly, homodimer. Interacts with RPS4, RPS6, SNC1, SRFR1, AvrRps4 and HopA1. Interacts with PAD4 (via N-terminus). Interacts with SAG101. EDS1-SAG101 and EDS1-PAD4 form separate complexes in pathogen-unchallenged cells.

The protein localises to the nucleus. It is found in the cytoplasm. Its subcellular location is the microsome. Its function is as follows. Positive regulator of basal resistance and of effector-triggered immunity specifically mediated by TIR-NB-LRR resistance proteins. Disruption by bacterial effector of EDS1-TIR-NB-LRR resistance protein interactions constitutes the first step in resistance activation. Triggers early plant defenses and hypersensitive response independently of PAD4, and then recruits PAD4 to potentiate plant defenses through the accumulation of salicylic acid. Nuclear localization is essential for basal and TIR-NB-LRR-conditioned immunity and for reprogramming defense gene expression, while cytoplasmic EDS1 is required to induce a complete immune response. Heterodimerization with PAD4 or SGA101 is necessary for TNL-mediated effector-triggered immunity. Contributes to nonhost resistance against E.amylovora. Has no direct lipase activity. The chain is Protein EDS1L from Arabidopsis thaliana (Mouse-ear cress).